The sequence spans 611 residues: Putative pentatricopeptide repeat-containing protein At1g56570 (611 aa).

PPR repeat units follow at residues 44-74 (HHILATNLIVSYFEKGLVEEARSLFDEMPDR), 75-109 (DVVAWTAMITGYASSNYNARAWECFHEMVKQGTSP), 110-144 (NEFTLSSVLKSCRNMKVLAYGALVHGVVVKLGMEG), 145-176 (SLYVDNAMMNMYATCSVTMEAACLIFRDIKVK), 177-211 (NDVTWTTLITGFTHLGDGIGGLKMYKQMLLENAEV), 212-246 (TPYCITIAVRASASIDSVTTGKQIHASVIKRGFQS), 247-281 (NLPVMNSILDLYCRCGYLSEAKHYFHEMEDKDLIT), 282-311 (WNTLISELERSDSSEALLMFQRFESQGFVP), 312-346 (NCYTFTSLVAACANIAALNCGQQLHGRIFRRGFNK), 347-377 (NVELANALIDMYAKCGNIPDSQRVFGEIVDR), 379-413 (NLVSWTSMMIGYGSHGYGAEAVELFDKMVSSGIRP), 414-444 (DRIVFMAVLSACRHAGLVEKGLKYFNVMESE), and 450-480 (DRDIYNCVVDLLGRAGKIGEAYELVERMPFK). A type E motif region spans residues 485–561 (TWGAILGACK…EAGMSWILVE (77 aa)). Residues 562 to 592 (NQVFSFAVSDKMCPNASSVYSVLGLLIEETR) are type E(+) motif.

This sequence belongs to the PPR family. PCMP-E subfamily.

The sequence is that of Putative pentatricopeptide repeat-containing protein At1g56570 (PCMP-E64) from Arabidopsis thaliana (Mouse-ear cress).